We begin with the raw amino-acid sequence, 1054 residues long: Isoleucine--tRNA ligase (1054 aa).

A 'HIGH' region motif is present at residues 58–68; it reads PFANGLPHYGH. Residues 627–631 carry the 'KMSKS' region motif; it reads KMSKS. Position 630 (Lys630) interacts with ATP.

Belongs to the class-I aminoacyl-tRNA synthetase family. IleS type 2 subfamily. In terms of assembly, monomer. Zn(2+) serves as cofactor.

It is found in the cytoplasm. It catalyses the reaction tRNA(Ile) + L-isoleucine + ATP = L-isoleucyl-tRNA(Ile) + AMP + diphosphate. Its function is as follows. Catalyzes the attachment of isoleucine to tRNA(Ile). As IleRS can inadvertently accommodate and process structurally similar amino acids such as valine, to avoid such errors it has two additional distinct tRNA(Ile)-dependent editing activities. One activity is designated as 'pretransfer' editing and involves the hydrolysis of activated Val-AMP. The other activity is designated 'posttransfer' editing and involves deacylation of mischarged Val-tRNA(Ile). The protein is Isoleucine--tRNA ligase of Corynebacterium efficiens (strain DSM 44549 / YS-314 / AJ 12310 / JCM 11189 / NBRC 100395).